The sequence spans 208 residues: uncharacterized protein (208 aa).

This is an uncharacterized protein from Ureaplasma parvum serovar 3 (strain ATCC 700970).